We begin with the raw amino-acid sequence, 132 residues long: MTMTDPLGDMLTRIRNGAARRKASVVTPASKLRARVLDVLQAEGYIRGYSEIDHGNGKAEITIELKYYEGASVIREIGRVSKPGRRVYVSVKSIPQVANGLGITILSTPKGVMADHQAREQNVGGEVLCSVF.

It belongs to the universal ribosomal protein uS8 family. In terms of assembly, part of the 30S ribosomal subunit. Contacts proteins S5 and S12.

One of the primary rRNA binding proteins, it binds directly to 16S rRNA central domain where it helps coordinate assembly of the platform of the 30S subunit. This Allorhizobium ampelinum (strain ATCC BAA-846 / DSM 112012 / S4) (Agrobacterium vitis (strain S4)) protein is Small ribosomal subunit protein uS8.